We begin with the raw amino-acid sequence, 313 residues long: Protein-methionine-sulfoxide reductase catalytic subunit MsrP (313 aa).

The segment at residues 1 to 45 (MPAYRPPHIASSEITPKSFYLSRRNFLGTAAGLAAIGLAGREAIA) is a signal peptide (tat-type signal). Mo-molybdopterin-binding positions include Asn71, 74-75 (YE), Cys128, Thr163, Asn213, Arg218, and 229-231 (GIK).

Belongs to the MsrP family. Heterodimer of a catalytic subunit (MsrP) and a heme-binding subunit (MsrQ). Mo-molybdopterin serves as cofactor. Predicted to be exported by the Tat system. The position of the signal peptide cleavage has not been experimentally proven.

The protein resides in the periplasm. The catalysed reaction is L-methionyl-[protein] + a quinone + H2O = L-methionyl-(S)-S-oxide-[protein] + a quinol. It carries out the reaction L-methionyl-[protein] + a quinone + H2O = L-methionyl-(R)-S-oxide-[protein] + a quinol. Part of the MsrPQ system that repairs oxidized periplasmic proteins containing methionine sulfoxide residues (Met-O), using respiratory chain electrons. Thus protects these proteins from oxidative-stress damage caused by reactive species of oxygen and chlorine generated by the host defense mechanisms. MsrPQ is essential for the maintenance of envelope integrity under bleach stress, rescuing a wide series of structurally unrelated periplasmic proteins from methionine oxidation. The catalytic subunit MsrP is non-stereospecific, being able to reduce both (R-) and (S-) diastereoisomers of methionine sulfoxide. This chain is Protein-methionine-sulfoxide reductase catalytic subunit MsrP, found in Agrobacterium fabrum (strain C58 / ATCC 33970) (Agrobacterium tumefaciens (strain C58)).